We begin with the raw amino-acid sequence, 295 residues long: Protease HtpX (295 aa).

The next 2 helical transmembrane spans lie at 4–24 (ILLF…TLSL) and 41–61 (SSLL…SLFI). A Zn(2+)-binding site is contributed by histidine 147. Glutamate 148 is an active-site residue. Histidine 151 provides a ligand contact to Zn(2+). Helical transmembrane passes span 158–178 (VTLA…ARII) and 199–219 (VATI…VMWF). Glutamate 224 serves as a coordination point for Zn(2+).

The protein belongs to the peptidase M48B family. Zn(2+) serves as cofactor.

Its subcellular location is the cell inner membrane. This Pseudomonas putida (strain W619) protein is Protease HtpX.